The sequence spans 165 residues: Protein phosphatase 1 regulatory subunit 14C (165 aa).

Positions methionine 1–glycine 12 are enriched in low complexity. Residues methionine 1 to threonine 73 form a disordered region. Position 2 is an N-acetylserine (serine 2). Serine 25 is subject to Phosphoserine. Residue arginine 27 is modified to Omega-N-methylarginine. Phosphoserine is present on serine 33. Over residues glycine 35 to glutamine 63 the composition is skewed to low complexity. Threonine 73 bears the Phosphothreonine; by ILK1 mark.

It belongs to the PP1 inhibitor family. In terms of processing, has over 600-fold higher inhibitory activity when phosphorylated, creating a molecular switch for regulating the phosphorylation status of PPP1CA substrates and smooth muscle contraction. The main inhibitory site appears to be Thr-73. In terms of tissue distribution, detected in breast cancer.

Its subcellular location is the cytoplasm. It is found in the membrane. Inhibitor of the PP1 regulatory subunit PPP1CA. The protein is Protein phosphatase 1 regulatory subunit 14C (PPP1R14C) of Homo sapiens (Human).